Here is a 381-residue protein sequence, read N- to C-terminus: Homoserine O-succinyltransferase (381 aa).

The region spanning 45-360 is the AB hydrolase-1 domain; the sequence is NAVLVCHALN…PHGHDAFLLD (316 aa). Serine 151 serves as the catalytic Nucleophile. Arginine 221 provides a ligand contact to substrate. Residues aspartate 321 and histidine 354 contribute to the active site. Residue aspartate 355 coordinates substrate.

The protein belongs to the AB hydrolase superfamily. MetX family. In terms of assembly, homodimer.

Its subcellular location is the cytoplasm. It catalyses the reaction L-homoserine + succinyl-CoA = O-succinyl-L-homoserine + CoA. It functions in the pathway amino-acid biosynthesis; L-methionine biosynthesis via de novo pathway; O-succinyl-L-homoserine from L-homoserine: step 1/1. Its function is as follows. Transfers a succinyl group from succinyl-CoA to L-homoserine, forming succinyl-L-homoserine. In Paraburkholderia xenovorans (strain LB400), this protein is Homoserine O-succinyltransferase.